Reading from the N-terminus, the 525-residue chain is Eukaryotic translation initiation factor 3 subunit L (525 aa).

Residues 1–19 are compositionally biased toward acidic residues; that stretch reads MYTQADEYDGGDAGYEDDY. The disordered stretch occupies residues 1–21; the sequence is MYTQADEYDGGDAGYEDDYSG. The PCI domain occupies 296–502; sequence DAIRCFSSVL…IHIADTKVDR (207 aa).

Belongs to the eIF-3 subunit L family. In terms of assembly, component of the eukaryotic translation initiation factor 3 (eIF-3) complex.

Its subcellular location is the cytoplasm. Its function is as follows. Component of the eukaryotic translation initiation factor 3 (eIF-3) complex, which is involved in protein synthesis of a specialized repertoire of mRNAs and, together with other initiation factors, stimulates binding of mRNA and methionyl-tRNAi to the 40S ribosome. The eIF-3 complex specifically targets and initiates translation of a subset of mRNAs involved in cell proliferation. The protein is Eukaryotic translation initiation factor 3 subunit L of Nematostella vectensis (Starlet sea anemone).